The following is a 203-amino-acid chain: LexA repressor (203 aa).

The segment at residues 28-48 (RAEIASQLGFRSPNAAEEHLK) is a DNA-binding region (H-T-H motif). Catalysis depends on for autocatalytic cleavage activity residues serine 120 and lysine 157.

Belongs to the peptidase S24 family. Homodimer.

It catalyses the reaction Hydrolysis of Ala-|-Gly bond in repressor LexA.. In terms of biological role, represses a number of genes involved in the response to DNA damage (SOS response), including recA and lexA. Binds to the 16 bp palindromic sequence 5'-CTGTATATATATACAG-3'. In the presence of single-stranded DNA, RecA interacts with LexA causing an autocatalytic cleavage which disrupts the DNA-binding part of LexA, leading to derepression of the SOS regulon and eventually DNA repair. This Proteus mirabilis (strain HI4320) protein is LexA repressor.